The sequence spans 144 residues: MLKGIHPALSPELLKTLAEMGHGDEIVLADTHFPAHSLHKNVIRADGISIDILLEAITPLFEFDAYVDAPLLMMKAVEGDSLDPNVETRYLNAIESAVGFTPNLTCLERFDFYTRAKQAYAVVVSGEIAKYGNIIIKKGVTPIL.

Histidine 22 serves as the catalytic Proton donor. Substrate-binding positions include aspartate 30, arginine 109, and 131-133 (YGN).

This sequence belongs to the RbsD / FucU family. FucU mutarotase subfamily. Homodecamer.

It localises to the cytoplasm. The enzyme catalyses alpha-L-fucose = beta-L-fucose. It participates in carbohydrate metabolism; L-fucose metabolism. Functionally, involved in the anomeric conversion of L-fucose. This is L-fucose mutarotase from Haemophilus influenzae (strain PittEE).